Reading from the N-terminus, the 79-residue chain is Cytochrome b (79 aa).

Transmembrane regions (helical) follow at residues 1–7 (TALFLAM), 31–52 (WLIR…YLHI), and 67–79 (WNIG…LTMM). Residues histidine 37 and histidine 51 each contribute to the heme b site.

This sequence belongs to the cytochrome b family. As to quaternary structure, the cytochrome bc1 complex contains 3 respiratory subunits (MT-CYB, CYC1 and UQCRFS1), 2 core proteins (UQCRC1 and UQCRC2) and probably 6 low-molecular weight proteins. Heme b is required as a cofactor.

It localises to the mitochondrion inner membrane. Its function is as follows. Component of the ubiquinol-cytochrome c reductase complex (complex III or cytochrome b-c1 complex) that is part of the mitochondrial respiratory chain. The b-c1 complex mediates electron transfer from ubiquinol to cytochrome c. Contributes to the generation of a proton gradient across the mitochondrial membrane that is then used for ATP synthesis. This Julidochromis regani (Convict julie) protein is Cytochrome b (mt-cyb).